A 153-amino-acid chain; its full sequence is 3-hydroxyacyl-[acyl-carrier-protein] dehydratase FabZ (153 aa).

Residue His-56 is part of the active site.

This sequence belongs to the thioester dehydratase family. FabZ subfamily.

The protein localises to the cytoplasm. It catalyses the reaction a (3R)-hydroxyacyl-[ACP] = a (2E)-enoyl-[ACP] + H2O. Its function is as follows. Involved in unsaturated fatty acids biosynthesis. Catalyzes the dehydration of short chain beta-hydroxyacyl-ACPs and long chain saturated and unsaturated beta-hydroxyacyl-ACPs. The sequence is that of 3-hydroxyacyl-[acyl-carrier-protein] dehydratase FabZ from Nitrosomonas europaea (strain ATCC 19718 / CIP 103999 / KCTC 2705 / NBRC 14298).